A 305-amino-acid chain; its full sequence is Probable GTP 3',8-cyclase (305 aa).

The Radical SAM core domain maps to asparagine 6–lysine 228. Arginine 15 contributes to the GTP binding site. The [4Fe-4S] cluster site is built by cysteine 22 and cysteine 26. S-adenosyl-L-methionine is bound at residue tyrosine 28. [4Fe-4S] cluster is bound at residue cysteine 29. GTP is bound at residue arginine 62. Glycine 66 is a binding site for S-adenosyl-L-methionine. Residue threonine 92 participates in GTP binding. S-adenosyl-L-methionine is bound at residue serine 116. A GTP-binding site is contributed by lysine 153. [4Fe-4S] cluster-binding residues include cysteine 249 and cysteine 252. Arginine 254–arginine 256 provides a ligand contact to GTP. Cysteine 266 is a binding site for [4Fe-4S] cluster.

It belongs to the radical SAM superfamily. MoaA family. [4Fe-4S] cluster is required as a cofactor.

The catalysed reaction is GTP + AH2 + S-adenosyl-L-methionine = (8S)-3',8-cyclo-7,8-dihydroguanosine 5'-triphosphate + 5'-deoxyadenosine + L-methionine + A + H(+). Its pathway is cofactor biosynthesis; molybdopterin biosynthesis. Its function is as follows. Catalyzes the cyclization of GTP to (8S)-3',8-cyclo-7,8-dihydroguanosine 5'-triphosphate. This chain is Probable GTP 3',8-cyclase, found in Methanothermobacter marburgensis (strain ATCC BAA-927 / DSM 2133 / JCM 14651 / NBRC 100331 / OCM 82 / Marburg) (Methanobacterium thermoautotrophicum).